A 988-amino-acid chain; its full sequence is UvrABC system protein A (988 aa).

Residue 33–40 (GLSGSGKS) participates in ATP binding. Residues 255-282 (CPVCDYSLPELEPRLFSFNAPVGACPSC) form a C4-type zinc finger. 2 ABC transporter domains span residues 312 to 589 (WDRR…PRSL) and 609 to 938 (PNPK…QFLA). 642–649 (GVSGSGKS) contacts ATP. The C4-type zinc-finger motif lies at 741–767 (CEACQGDGMIKVEMHFLPDVYVPCDVC). Residues 948-988 (ETRPAAMANKPDARPPRKVKPEKVAKATKTATKKTAKKKAS) form a disordered region. The segment covering 958-972 (PDARPPRKVKPEKVA) has biased composition (basic and acidic residues). The span at 978–988 (ATKKTAKKKAS) shows a compositional bias: basic residues.

The protein belongs to the ABC transporter superfamily. UvrA family. Forms a heterotetramer with UvrB during the search for lesions.

It localises to the cytoplasm. Its function is as follows. The UvrABC repair system catalyzes the recognition and processing of DNA lesions. UvrA is an ATPase and a DNA-binding protein. A damage recognition complex composed of 2 UvrA and 2 UvrB subunits scans DNA for abnormalities. When the presence of a lesion has been verified by UvrB, the UvrA molecules dissociate. The sequence is that of UvrABC system protein A from Xanthomonas campestris pv. campestris (strain ATCC 33913 / DSM 3586 / NCPPB 528 / LMG 568 / P 25).